Consider the following 271-residue polypeptide: Uridine-cytidine kinase 1-B (271 aa).

An ATP-binding site is contributed by 24-32 (GGTASGKST). Positions 81, 109, 114, 163, 172, and 180 each coordinate substrate. Asp-209 provides a ligand contact to ATP. Residues 240-271 (RSQKRTLPGQGDSGGLLLQGKRTHLESSSRPH) form a disordered region. Low complexity predominate over residues 246-259 (LPGQGDSGGLLLQG). The segment covering 262–271 (THLESSSRPH) has biased composition (basic and acidic residues).

This sequence belongs to the uridine kinase family.

The catalysed reaction is uridine + ATP = UMP + ADP + H(+). It catalyses the reaction cytidine + ATP = CMP + ADP + H(+). The protein operates within pyrimidine metabolism; CTP biosynthesis via salvage pathway; CTP from cytidine: step 1/3. It participates in pyrimidine metabolism; UMP biosynthesis via salvage pathway; UMP from uridine: step 1/1. Its function is as follows. Phosphorylates uridine and cytidine to uridine monophosphate and cytidine monophosphate. Does not phosphorylate deoxyribonucleosides or purine ribonucleosides. Can use ATP or GTP as a phosphate donor. In Xenopus laevis (African clawed frog), this protein is Uridine-cytidine kinase 1-B (uck1-b).